Here is a 2236-residue protein sequence, read N- to C-terminus: uncharacterized protein (2236 aa).

Spectrin repeat units lie at residues 46-146 (QVYL…RQLE) and 238-335 (QKFV…TDIE). Coiled coils occupy residues 496–541 (VVEQ…TVNS) and 603–631 (DDQQ…VGRQ). 5 Spectrin repeats span residues 839–949 (YEYD…KTLK), 1048–1146 (KKLE…KRME), 1261–1361 (LGAE…VDLN), 1367–1459 (ILID…KSLA), and 1562–1667 (QKVV…NRLE). A coiled-coil region spans residues 1835-1869 (QNSTDAEKKLSLVSERLNALKKQLDLLAEKIAVDD). 2 EF-hand domains span residues 2104–2139 (KQLH…QGYN) and 2141–2176 (SAEN…HETT). 5 residues coordinate Ca(2+): D2154, S2156, T2158, H2160, and D2165.

The protein belongs to the spectrin family.

This is an uncharacterized protein from Caenorhabditis elegans.